Consider the following 292-residue polypeptide: Glycine--tRNA ligase alpha subunit (292 aa).

The protein belongs to the class-II aminoacyl-tRNA synthetase family. In terms of assembly, tetramer of two alpha and two beta subunits.

The protein localises to the cytoplasm. It carries out the reaction tRNA(Gly) + glycine + ATP = glycyl-tRNA(Gly) + AMP + diphosphate. This Desulfovibrio desulfuricans (strain ATCC 27774 / DSM 6949 / MB) protein is Glycine--tRNA ligase alpha subunit.